A 254-amino-acid polypeptide reads, in one-letter code: 5'-nucleotidase SurE (254 aa).

4 residues coordinate a divalent metal cation: Asp8, Asp9, Ser40, and Asn93.

Belongs to the SurE nucleotidase family. Requires a divalent metal cation as cofactor.

It is found in the cytoplasm. The enzyme catalyses a ribonucleoside 5'-phosphate + H2O = a ribonucleoside + phosphate. Functionally, nucleotidase that shows phosphatase activity on nucleoside 5'-monophosphates. This is 5'-nucleotidase SurE from Methylobacterium radiotolerans (strain ATCC 27329 / DSM 1819 / JCM 2831 / NBRC 15690 / NCIMB 10815 / 0-1).